The following is a 116-amino-acid chain: Aspartate 1-decarboxylase (116 aa).

Ser25 functions as the Schiff-base intermediate with substrate; via pyruvic acid in the catalytic mechanism. The residue at position 25 (Ser25) is a Pyruvic acid (Ser). Substrate is bound at residue Thr57. Tyr58 serves as the catalytic Proton donor. 73–75 (GAA) is a substrate binding site.

Belongs to the PanD family. As to quaternary structure, heterooctamer of four alpha and four beta subunits. Pyruvate serves as cofactor. Is synthesized initially as an inactive proenzyme, which is activated by self-cleavage at a specific serine bond to produce a beta-subunit with a hydroxyl group at its C-terminus and an alpha-subunit with a pyruvoyl group at its N-terminus.

The protein resides in the cytoplasm. It carries out the reaction L-aspartate + H(+) = beta-alanine + CO2. Its pathway is cofactor biosynthesis; (R)-pantothenate biosynthesis; beta-alanine from L-aspartate: step 1/1. Functionally, catalyzes the pyruvoyl-dependent decarboxylation of aspartate to produce beta-alanine. The chain is Aspartate 1-decarboxylase from Leptospira borgpetersenii serovar Hardjo-bovis (strain JB197).